The sequence spans 720 residues: Nucleolar protein 11 (720 aa).

The disordered stretch occupies residues 365–392 (KDPETKPSNAGAQKKTRERKTNANAGNG).

The protein resides in the nucleus. It localises to the nucleolus. Its function is as follows. Ribosome biogenesis factor. May be required for both optimal rDNA transcription and pre-rRNA processing. The protein is Nucleolar protein 11 (nol11) of Xenopus laevis (African clawed frog).